We begin with the raw amino-acid sequence, 407 residues long: Multifunctional CCA protein (407 aa).

2 residues coordinate ATP: glycine 8 and arginine 11. CTP is bound by residues glycine 8 and arginine 11. 2 residues coordinate Mg(2+): aspartate 21 and aspartate 23. Residues arginine 91, arginine 137, and arginine 140 each coordinate ATP. Positions 91, 137, and 140 each coordinate CTP. Residues 228–329 (TGIHTLLVAE…VKIFNKLDVW (102 aa)) form the HD domain.

The protein belongs to the tRNA nucleotidyltransferase/poly(A) polymerase family. Bacterial CCA-adding enzyme type 1 subfamily. Monomer. Can also form homodimers and oligomers. Mg(2+) is required as a cofactor. It depends on Ni(2+) as a cofactor.

It catalyses the reaction a tRNA precursor + 2 CTP + ATP = a tRNA with a 3' CCA end + 3 diphosphate. The enzyme catalyses a tRNA with a 3' CCA end + 2 CTP + ATP = a tRNA with a 3' CCACCA end + 3 diphosphate. Functionally, catalyzes the addition and repair of the essential 3'-terminal CCA sequence in tRNAs without using a nucleic acid template. Adds these three nucleotides in the order of C, C, and A to the tRNA nucleotide-73, using CTP and ATP as substrates and producing inorganic pyrophosphate. tRNA 3'-terminal CCA addition is required both for tRNA processing and repair. Also involved in tRNA surveillance by mediating tandem CCA addition to generate a CCACCA at the 3' terminus of unstable tRNAs. While stable tRNAs receive only 3'-terminal CCA, unstable tRNAs are marked with CCACCA and rapidly degraded. The protein is Multifunctional CCA protein of Vibrio vulnificus (strain YJ016).